Reading from the N-terminus, the 322-residue chain is MLVDKYGRVVDYLRISVTQRCNFRCRYCMPTTPFSWTPKENLLSFEELFLFVKVAIDEGVTKIRLTGGEPLVRKDLDVFVKMISDYKPDIDLALTTNGFMLRHYAKRLRDAGLKRINMSLDTLNEQKAKFIAQKSVLHEVLTGFEAALDAGLKVKINTVALKGVNDDELINLLEFARFRNSQIRFIEYMENSHAKDDLKGLKSDEILDIISQKYNVTKDEKLPNAPASIYRLDDGYKFGIIDPHKHDFCESCNRIRLSAEGLLIPCLYFEDALSIKDAVSRGDIIGASEILRQVLANKPKENKWAVGAANETSSRAFYQTGG.

The Radical SAM core domain maps to Lys-5 to Asp-233. Arg-14 contacts GTP. 2 residues coordinate [4Fe-4S] cluster: Cys-21 and Cys-25. Position 27 (Tyr-27) interacts with S-adenosyl-L-methionine. Position 28 (Cys-28) interacts with [4Fe-4S] cluster. A GTP-binding site is contributed by Arg-64. Gly-68 contacts S-adenosyl-L-methionine. Thr-95 contacts GTP. Ser-119 is a binding site for S-adenosyl-L-methionine. Lys-155 contacts GTP. Met-189 lines the S-adenosyl-L-methionine pocket. [4Fe-4S] cluster-binding residues include Cys-249 and Cys-252. A GTP-binding site is contributed by Arg-254–Arg-256. A [4Fe-4S] cluster-binding site is contributed by Cys-266.

Belongs to the radical SAM superfamily. MoaA family. Monomer and homodimer. The cofactor is [4Fe-4S] cluster.

It carries out the reaction GTP + AH2 + S-adenosyl-L-methionine = (8S)-3',8-cyclo-7,8-dihydroguanosine 5'-triphosphate + 5'-deoxyadenosine + L-methionine + A + H(+). The protein operates within cofactor biosynthesis; molybdopterin biosynthesis. Functionally, catalyzes the cyclization of GTP to (8S)-3',8-cyclo-7,8-dihydroguanosine 5'-triphosphate. In Campylobacter curvus (strain 525.92), this protein is GTP 3',8-cyclase.